The following is a 222-amino-acid chain: Protein-L-isoaspartate O-methyltransferase (222 aa).

The active site involves Ser73.

This sequence belongs to the methyltransferase superfamily. L-isoaspartyl/D-aspartyl protein methyltransferase family.

It is found in the cytoplasm. It carries out the reaction [protein]-L-isoaspartate + S-adenosyl-L-methionine = [protein]-L-isoaspartate alpha-methyl ester + S-adenosyl-L-homocysteine. In terms of biological role, catalyzes the methyl esterification of L-isoaspartyl residues in peptides and proteins that result from spontaneous decomposition of normal L-aspartyl and L-asparaginyl residues. It plays a role in the repair and/or degradation of damaged proteins. The polypeptide is Protein-L-isoaspartate O-methyltransferase (Chromobacterium violaceum (strain ATCC 12472 / DSM 30191 / JCM 1249 / CCUG 213 / NBRC 12614 / NCIMB 9131 / NCTC 9757 / MK)).